A 112-amino-acid polypeptide reads, in one-letter code: Large ribosomal subunit protein uL22 (112 aa).

The protein belongs to the universal ribosomal protein uL22 family. Part of the 50S ribosomal subunit.

Its function is as follows. This protein binds specifically to 23S rRNA; its binding is stimulated by other ribosomal proteins, e.g. L4, L17, and L20. It is important during the early stages of 50S assembly. It makes multiple contacts with different domains of the 23S rRNA in the assembled 50S subunit and ribosome. The globular domain of the protein is located near the polypeptide exit tunnel on the outside of the subunit, while an extended beta-hairpin is found that lines the wall of the exit tunnel in the center of the 70S ribosome. The polypeptide is Large ribosomal subunit protein uL22 (Anaplasma marginale (strain Florida)).